Here is a 103-residue protein sequence, read N- to C-terminus: UPF0145 protein BCE33L0904 (103 aa).

Belongs to the UPF0145 family.

The chain is UPF0145 protein BCE33L0904 from Bacillus cereus (strain ZK / E33L).